The primary structure comprises 229 residues: Prolactin (229 aa).

Residues 1 to 30 form the signal peptide; it reads MSNRGASLKGLFLAVLLVSNTLLTKEGVTS. Cystine bridges form between C34-C41, C88-C204, and C221-C229.

Belongs to the somatotropin/prolactin family.

The protein resides in the secreted. The protein is Prolactin (PRL) of Gallus gallus (Chicken).